The following is a 204-amino-acid chain: Recombination protein RecR (204 aa).

A C4-type zinc finger spans residues 63-78 (CNRCFNITVEDPCTIC). Positions 86 to 181 (RQVCVVEEPL…RVTRLARGLP (96 aa)) constitute a Toprim domain.

The protein belongs to the RecR family.

May play a role in DNA repair. It seems to be involved in an RecBC-independent recombinational process of DNA repair. It may act with RecF and RecO. The sequence is that of Recombination protein RecR from Herpetosiphon aurantiacus (strain ATCC 23779 / DSM 785 / 114-95).